Consider the following 98-residue polypeptide: Co-chaperonin GroES 5 (98 aa).

This sequence belongs to the GroES chaperonin family. As to quaternary structure, heptamer of 7 subunits arranged in a ring. Interacts with the chaperonin GroEL.

It localises to the cytoplasm. Together with the chaperonin GroEL, plays an essential role in assisting protein folding. The GroEL-GroES system forms a nano-cage that allows encapsulation of the non-native substrate proteins and provides a physical environment optimized to promote and accelerate protein folding. GroES binds to the apical surface of the GroEL ring, thereby capping the opening of the GroEL channel. This Mesorhizobium japonicum (strain LMG 29417 / CECT 9101 / MAFF 303099) (Mesorhizobium loti (strain MAFF 303099)) protein is Co-chaperonin GroES 5.